A 140-amino-acid chain; its full sequence is Ribonuclease P protein component (140 aa).

It belongs to the RnpA family. Consists of a catalytic RNA component (M1 or rnpB) and a protein subunit.

The catalysed reaction is Endonucleolytic cleavage of RNA, removing 5'-extranucleotides from tRNA precursor.. RNaseP catalyzes the removal of the 5'-leader sequence from pre-tRNA to produce the mature 5'-terminus. It can also cleave other RNA substrates such as 4.5S RNA. The protein component plays an auxiliary but essential role in vivo by binding to the 5'-leader sequence and broadening the substrate specificity of the ribozyme. This Nostoc sp. (strain PCC 7120 / SAG 25.82 / UTEX 2576) protein is Ribonuclease P protein component.